The primary structure comprises 615 residues: Chaperone protein HscA (615 aa).

The protein belongs to the heat shock protein 70 family.

In terms of biological role, chaperone involved in the maturation of iron-sulfur cluster-containing proteins. Has a low intrinsic ATPase activity which is markedly stimulated by HscB. Involved in the maturation of IscU. The sequence is that of Chaperone protein HscA from Xenorhabdus nematophila (strain ATCC 19061 / DSM 3370 / CCUG 14189 / LMG 1036 / NCIMB 9965 / AN6).